Consider the following 156-residue polypeptide: Phosphopantetheine adenylyltransferase (156 aa).

Thr10 serves as a coordination point for substrate. Residues 10–11 (TF) and His18 contribute to the ATP site. Positions 42, 74, and 88 each coordinate substrate. Residues 89-91 (GIR), Glu99, and 124-130 (WAFISSS) each bind ATP.

The protein belongs to the bacterial CoaD family. Homohexamer. Mg(2+) is required as a cofactor.

It localises to the cytoplasm. The enzyme catalyses (R)-4'-phosphopantetheine + ATP + H(+) = 3'-dephospho-CoA + diphosphate. Its pathway is cofactor biosynthesis; coenzyme A biosynthesis; CoA from (R)-pantothenate: step 4/5. Functionally, reversibly transfers an adenylyl group from ATP to 4'-phosphopantetheine, yielding dephospho-CoA (dPCoA) and pyrophosphate. In Hamiltonella defensa subsp. Acyrthosiphon pisum (strain 5AT), this protein is Phosphopantetheine adenylyltransferase.